The sequence spans 401 residues: Phosphoglycerate kinase (401 aa).

Substrate contacts are provided by residues 23-25 (DFN), R39, 62-65 (HLGR), R121, and R154. ATP-binding positions include K207, G298, E329, and 355–358 (GGDT).

This sequence belongs to the phosphoglycerate kinase family. In terms of assembly, monomer.

The protein resides in the cytoplasm. The enzyme catalyses (2R)-3-phosphoglycerate + ATP = (2R)-3-phospho-glyceroyl phosphate + ADP. It functions in the pathway carbohydrate degradation; glycolysis; pyruvate from D-glyceraldehyde 3-phosphate: step 2/5. The polypeptide is Phosphoglycerate kinase (Campylobacter fetus subsp. fetus (strain 82-40)).